A 317-amino-acid polypeptide reads, in one-letter code: Ret finger protein-like 1 (317 aa).

The RING-type zinc finger occupies 40–82; the sequence is CPVCSDYLEKPMSLECGCAVCFKCINSLQKEPHGEDLLCCCCS. The 195-residue stretch at 107–301 folds into the B30.2/SPRY domain; that stretch reads EPKLKKILQM…DKSVLSICPV (195 aa).

In terms of processing, phosphorylated by PKC and CDK1. The antiproliferative effect seems to be positively regulated by PKC phosphorylation and negatively by CDK1 phosphorylation. In terms of tissue distribution, seems to be expressed in prostate and less abundantly in adult brain, fetal liver, and fetal kidney.

The protein resides in the cytoplasm. It is found in the nucleus. Its function is as follows. Negatively regulates the G2-M phase transition, possibly by promoting cyclin B1/CCNB1 and CDK1 proteasomal degradation and thereby preventing their accumulation during interphase. The chain is Ret finger protein-like 1 (RFPL1) from Homo sapiens (Human).